The primary structure comprises 602 residues: MSRVKWRNEKIIVALGSLWILGFAAWAFLLFDLLGTSVKEGILEGPREGVFWTAAQYRNSFSRFERQLILYATRQDRDFDNVLLQLDSLEASFGFLERPSEVSAYWLSIPKARDDIAELSRFMATLRRDVPALGARAGDSRRVLEDVARHWPKVNALANYFRAIEMEQRDFTFHQLKEKRRAIVMLGGVLGVILGALFLLLFYTIRTRGSLLEQQQAALDAQRKASDRAFEMIAAKNAFLGMVSHELRTPLQAICGSIEVLLARPQSDANMKTIKRLQNSAASLEAQVKDLTDYIKLRSTNRSVQSDPVEIAPLLADVLDPLRGRIRDKHLNASLRVEPPDLVVKSDRKLIQQIASNLVENSIKYTNSGTIAISAELAGTPSNRTMQIAVRDTGVGIAKNLLSKIFEPFFRVNDPGVRHVDGIGMGLAVVQELVVALRGHVDVRSVVGEGSEFVVTLPVELPGSADAPDDDAPPSLQTTHRDLHALVVDDNENARETLGAMLTALGIRADLRGTGKEGLRCFGECQHDIVVLDLELPDISGFEVAEQIRWATSPDAAKKTTILGVSAYESAMLKGDHAVFDAFVPKPIHLDTLNGIVSRLRS.

2 consecutive transmembrane segments (helical) span residues 11–31 and 182–202; these read IIVA…FLLF and AIVM…LLLF. The 220-residue stretch at 242–461 folds into the Histidine kinase domain; sequence MVSHELRTPL…EFVVTLPVEL (220 aa). Position 245 is a phosphohistidine; by autocatalysis (histidine 245). The Response regulatory domain maps to 484–601; that stretch reads HALVVDDNEN…TLNGIVSRLR (118 aa). At aspartate 533 the chain carries 4-aspartylphosphate.

It is found in the cell inner membrane. The enzyme catalyses ATP + protein L-histidine = ADP + protein N-phospho-L-histidine.. Functionally, member of a two-component regulatory system involved in control of gene expression; inhibits synthesis of (at least) the polyketide antibiotic thailandamide. Its two-component partner may be BTH_I0635. This Burkholderia thailandensis (strain ATCC 700388 / DSM 13276 / CCUG 48851 / CIP 106301 / E264) protein is Sensor histidine kinase AtsR.